Here is a 244-residue protein sequence, read N- to C-terminus: LexA repressor (244 aa).

The interval 1–24 (MSDSSDTTVDGASDGASDGASGAD) is disordered. The segment covering 10-24 (DGASDGASDGASGAD) has biased composition (low complexity). Residues 58-78 (IREIGDAVGLTSTSSVAHQLR) constitute a DNA-binding region (H-T-H motif). Residues Ser168 and Lys205 each act as for autocatalytic cleavage activity in the active site.

This sequence belongs to the peptidase S24 family. Homodimer.

The enzyme catalyses Hydrolysis of Ala-|-Gly bond in repressor LexA.. Its function is as follows. Represses a number of genes involved in the response to DNA damage (SOS response), including recA and lexA. In the presence of single-stranded DNA, RecA interacts with LexA causing an autocatalytic cleavage which disrupts the DNA-binding part of LexA, leading to derepression of the SOS regulon and eventually DNA repair. The protein is LexA repressor of Mycobacterium marinum (strain ATCC BAA-535 / M).